The chain runs to 624 residues: Aliphatic sulfonate oxidoreductase, WOR-like subunit (624 aa).

Tungstopterin-binding residues include K77, S93, V94, S96, H195, A196, G198, and Y199. D299, C302, and C306 together coordinate [4Fe-4S] cluster. The tungstopterin site is built by D353, L357, D358, G359, T470, D490, I494, C495, and N496. C495 serves as a coordination point for [4Fe-4S] cluster. Residues 552-575 (KDDDNPPRFYEPLPSGPVKGKAPN) form a disordered region.

This sequence belongs to the AOR/FOR family. Heterodimer composed of a small WOR5-S subunit, with four [4Fe-4S] clusters, and a large WOR5-L subunit, containing the active site tungsto-bispyranopterin cofactor as well as another [4Fe-4S] cluster. [4Fe-4S] cluster is required as a cofactor. Requires tungstopterin as cofactor.

Its subcellular location is the cytoplasm. The enzyme catalyses an aliphatic sulfonate + 4 oxidized [4Fe-4S]-[ferredoxin] + 2 H2O = 4 reduced [4Fe-4S]-[ferredoxin] + a carboxylate + sulfite + 6 H(+). The catalysed reaction is an aliphatic sulfonate + 2 oxidized [4Fe-4S]-[ferredoxin] + H2O = 2 reduced [4Fe-4S]-[ferredoxin] + an aldehyde + sulfite + 3 H(+). It carries out the reaction 2 oxidized [4Fe-4S]-[ferredoxin] + an aldehyde + H2O = 2 reduced [4Fe-4S]-[ferredoxin] + a carboxylate + 3 H(+). It catalyses the reaction 4 oxidized [4Fe-4S]-[ferredoxin] + taurine + 2 H2O = 4 reduced [4Fe-4S]-[ferredoxin] + sulfite + glycine + 6 H(+). The enzyme catalyses 2 oxidized [4Fe-4S]-[ferredoxin] + taurine + H2O = aminoacetaldehyde + 2 reduced [4Fe-4S]-[ferredoxin] + sulfite + 3 H(+). The catalysed reaction is aminoacetaldehyde + 2 oxidized [4Fe-4S]-[ferredoxin] + H2O = 2 reduced [4Fe-4S]-[ferredoxin] + glycine + 3 H(+). In terms of biological role, WOR-like catalytic subunit of an oxidoreductase that can desulfonate and oxidize aliphatic sulfonates such as taurine. The activity involves two steps: an oxidative desulfonation reaction, followed by the activation of a second water molecule and oxidation of the resulting aldehyde. May be involved in the oxidation of various aliphatic sulfonates and also phosphonates. In vitro, has a broad substrate specificity with a high affinity for several substituted and nonsubstituted aliphatic and aromatic aldehydes with various chain lengths, with methyl viologen or benzyl viologen as electron acceptor. Ferredoxin is the physiological electron acceptor. The sequence is that of Aliphatic sulfonate oxidoreductase, WOR-like subunit from Pyrococcus furiosus (strain ATCC 43587 / DSM 3638 / JCM 8422 / Vc1).